The following is a 115-amino-acid chain: Large ribosomal subunit protein bL19 (115 aa).

The protein belongs to the bacterial ribosomal protein bL19 family.

In terms of biological role, this protein is located at the 30S-50S ribosomal subunit interface and may play a role in the structure and function of the aminoacyl-tRNA binding site. This chain is Large ribosomal subunit protein bL19, found in Aeromonas hydrophila subsp. hydrophila (strain ATCC 7966 / DSM 30187 / BCRC 13018 / CCUG 14551 / JCM 1027 / KCTC 2358 / NCIMB 9240 / NCTC 8049).